The sequence spans 195 residues: Thymidine kinase (195 aa).

ATP-binding positions include 15-22 (GSMFSGKT) and 91-94 (DEAN). The active-site Proton acceptor is glutamate 92. Residues cysteine 148, cysteine 151, cysteine 186, and cysteine 189 each coordinate Zn(2+).

Belongs to the thymidine kinase family. As to quaternary structure, homotetramer.

The protein localises to the cytoplasm. The catalysed reaction is thymidine + ATP = dTMP + ADP + H(+). In Halobacterium salinarum (strain ATCC 29341 / DSM 671 / R1), this protein is Thymidine kinase.